The primary structure comprises 186 residues: Trafficking protein particle complex subunit 5 (186 aa).

Belongs to the TRAPP small subunits family. BET3 subfamily. Part of the multisubunit TRAPP (transport protein particle) complex.

It is found in the golgi apparatus. It localises to the cis-Golgi network. Its subcellular location is the endoplasmic reticulum. Its function is as follows. May play a role in vesicular transport from endoplasmic reticulum to Golgi. The protein is Trafficking protein particle complex subunit 5 (trappc5) of Dictyostelium discoideum (Social amoeba).